Consider the following 447-residue polypeptide: Membrane metalloprotease ARASP, chloroplastic (447 aa).

The N-terminal 73 residues, 1–73 (MLLNISSSPI…YPDGERFDFR (73 aa)), are a transit peptide targeting the chloroplast. H102 provides a ligand contact to Zn(2+). The active site involves E103. H106 is a binding site for Zn(2+). The helical transmembrane segment at 177 to 197 (SIVVSAGIIANVIFAYAIIFV) threads the bilayer. In terms of domain architecture, PDZ spans 202–244 (VGLPVQEAFPGVLVPEVKTFSAASRDGLLSGDVILAVDGTELS). 2 helical membrane passes run 379-399 (LAVINLLPLPALDGGTLALIL) and 413-433 (VEQGIMSSGIMLVIFLGLFLI).

It belongs to the peptidase M50A family. The cofactor is Zn(2+). In terms of tissue distribution, expressed in green seedlings and cotyledons. Low levels of expression in roots, siliques and seeds.

Its subcellular location is the plastid. It is found in the chloroplast inner membrane. Its function is as follows. Metalloprotease essential for chloroplast and plant development. May be involved in regulated intramembrane proteolysis (RIP). The protein is Membrane metalloprotease ARASP, chloroplastic of Arabidopsis thaliana (Mouse-ear cress).